We begin with the raw amino-acid sequence, 178 residues long: Single-stranded DNA-binding protein DdrB (178 aa).

The interval 139-178 is disordered; that stretch reads RYAVPGSNRPQAGAPARSAATRAQGARPGAVAVQDEETPF. Over residues 147-165 the composition is skewed to low complexity; it reads RPQAGAPARSAATRAQGAR.

Homopentamer; arranged in a ring-structure.

SsDNA-binding protein that probably contributes to the ionizing radiation resistance of D.geothermalis. Plays a role in DNA repair and genome reconstitution, in a RecA-independent process, and is necessary for recovery from severe genomic fragmentation as a result of exposure to severe levels of ionizing radiation. Binds single-stranded DNA but not duplex DNA. This is Single-stranded DNA-binding protein DdrB (ddrB) from Deinococcus geothermalis (strain DSM 11300 / CIP 105573 / AG-3a).